The sequence spans 485 residues: Cysteine protease atg4da (485 aa).

The interval 22-46 is disordered; that stretch reads ASASSKRHLGHGAVPDGIREGSGEP. The Nucleophile role is filled by Cys131. Residues Asp368 and His370 contribute to the active site.

This sequence belongs to the peptidase C54 family.

The protein resides in the cytoplasm. It catalyses the reaction [protein]-C-terminal L-amino acid-glycyl-phosphatidylethanolamide + H2O = [protein]-C-terminal L-amino acid-glycine + a 1,2-diacyl-sn-glycero-3-phosphoethanolamine. The enzyme catalyses [protein]-C-terminal L-amino acid-glycyl-phosphatidylserine + H2O = [protein]-C-terminal L-amino acid-glycine + a 1,2-diacyl-sn-glycero-3-phospho-L-serine. Functionally, cysteine protease that plays a key role in autophagy by mediating both proteolytic activation and delipidation of ATG8 family proteins. The protease activity is required for proteolytic activation of ATG8 family proteins to reveal a C-terminal glycine. Exposure of the glycine at the C-terminus is essential for ATG8 proteins conjugation to phosphatidylethanolamine (PE) and insertion to membranes, which is necessary for autophagy. In addition to the protease activity, also mediates delipidation of ATG8 family proteins. Catalyzes delipidation of PE-conjugated forms of ATG8 proteins during macroautophagy. Also involved in non-canonical autophagy, a parallel pathway involving conjugation of ATG8 proteins to single membranes at endolysosomal compartments, by catalyzing delipidation of ATG8 proteins conjugated to phosphatidylserine (PS). ATG4D plays a role in the autophagy-mediated neuronal homeostasis in the central nervous system. This is Cysteine protease atg4da from Danio rerio (Zebrafish).